The following is a 1249-amino-acid chain: AMB antimetabolite synthetase AmbB (1249 aa).

The adenylation stretch occupies residues 245–633; that stretch reads FEAQARRTPQ…LGRLDDQVKF (389 aa). A disordered region spans residues 716 to 735; the sequence is IDRKALPRPQATGAEPQALP. Residues 734 to 809 enclose the Carrier domain; sequence LPSDPLEQAL…ALLELLRQAA (76 aa). Position 768 is an O-(pantetheine 4'-phosphoryl)serine (S768). Residues 823–1150 form a condensation region; the sequence is GLSLAERRLW…CVTQALRQRG (328 aa).

It belongs to the NRP synthetase family. Pantetheine 4'-phosphate serves as cofactor.

It carries out the reaction holo-[peptidyl-carrier protein] + L-alanine + ATP = L-alanyl-[peptidyl-carrier protein] + AMP + diphosphate. Involved in the biosynthesis of the antimetabolite L-2-amino-4-methoxy-trans-3-butenoic acid (AMB), a non-proteinogenic amino acid which is toxic for prokaryotes and eukaryotes. Adenylates L-alanine and loads it onto its peptidyl carrier domain via a thioester linkage to the phosphopanthetheine moiety. In addition, loads activated L-Ala in trans onto the second carrier domain of AmbE. Can also activate L-Ser, Gly and D-Ala, albeit to a lower extent. The condensation domain of AmbB probably condenses the activated L-Ala and the L-Glu loaded on AmbE to form a L-Glu-L-Ala dipeptide at the first carrier domain of AmbE. This Pseudomonas aeruginosa (strain ATCC 15692 / DSM 22644 / CIP 104116 / JCM 14847 / LMG 12228 / 1C / PRS 101 / PAO1) protein is AMB antimetabolite synthetase AmbB.